A 673-amino-acid polypeptide reads, in one-letter code: Exoribonuclease 2 (673 aa).

An RNB domain is found at 191 to 516 (RTDLTATPFF…NHRLLKAVIA (326 aa)). The S1 motif domain maps to 562–645 (DKVFNAEIID…ETRSLIAKPA (84 aa)). The disordered stretch occupies residues 650–673 (PGPAPVAPTSEADATPADEAPKAE).

This sequence belongs to the RNR ribonuclease family. RNase II subfamily.

Its subcellular location is the cytoplasm. It carries out the reaction Exonucleolytic cleavage in the 3'- to 5'-direction to yield nucleoside 5'-phosphates.. Involved in mRNA degradation. Hydrolyzes single-stranded polyribonucleotides processively in the 3' to 5' direction. In Aeromonas hydrophila subsp. hydrophila (strain ATCC 7966 / DSM 30187 / BCRC 13018 / CCUG 14551 / JCM 1027 / KCTC 2358 / NCIMB 9240 / NCTC 8049), this protein is Exoribonuclease 2.